The sequence spans 120 residues: Fumarate reductase subunit D (120 aa).

Transmembrane regions (helical) follow at residues 25–45, 55–75, and 100–120; these read FAMLTPVTILVLGILVPLGVI, VAGFVTSIIGALFVIGSISMP, and IACYAAAALATVLSVVFIFMI.

This sequence belongs to the FrdD family. In terms of assembly, part of an enzyme complex containing four subunits: a flavoprotein (FrdA), an iron-sulfur protein (FrdB), and two hydrophobic anchor proteins (FrdC and FrdD).

The protein resides in the cell inner membrane. In terms of biological role, anchors the catalytic components of the fumarate reductase complex to the cell membrane, binds quinones. In Aliivibrio fischeri (strain MJ11) (Vibrio fischeri), this protein is Fumarate reductase subunit D.